A 693-amino-acid chain; its full sequence is Elongation factor G (693 aa).

One can recognise a tr-type G domain in the interval 8 to 284 (DMTRNVGIMA…AIVNYMPAPT (277 aa)). GTP contacts are provided by residues 17–24 (AHIDAGKT), 81–85 (DTPGH), and 135–138 (NKMD).

It belongs to the TRAFAC class translation factor GTPase superfamily. Classic translation factor GTPase family. EF-G/EF-2 subfamily.

It is found in the cytoplasm. Its function is as follows. Catalyzes the GTP-dependent ribosomal translocation step during translation elongation. During this step, the ribosome changes from the pre-translocational (PRE) to the post-translocational (POST) state as the newly formed A-site-bound peptidyl-tRNA and P-site-bound deacylated tRNA move to the P and E sites, respectively. Catalyzes the coordinated movement of the two tRNA molecules, the mRNA and conformational changes in the ribosome. This Fusobacterium nucleatum subsp. nucleatum (strain ATCC 25586 / DSM 15643 / BCRC 10681 / CIP 101130 / JCM 8532 / KCTC 2640 / LMG 13131 / VPI 4355) protein is Elongation factor G.